Reading from the N-terminus, the 915-residue chain is Phototropin-2 (915 aa).

The segment covering 1–10 (MERPRAPPSP) has biased composition (pro residues). Disordered stretches follow at residues 1–62 (MERP…EFQD) and 84–118 (DDGISFKLSSEVERSKNMSRRSSEESTSSESGAFP). Phosphoserine occurs at positions 9 and 22. Residues 27 to 43 (NPSSGKETHGSTSSSSK) are compositionally biased toward polar residues. Over residues 93-107 (SEVERSKNMSRRSSE) the composition is skewed to basic and acidic residues. Residues 120-193 (VSQELKTALS…AKIRDCVKNG (74 aa)) form the PAS 1 domain. At S121 the chain carries Phosphoserine. N169 contacts FMN. C170 is subject to S-4a-FMN cysteine. R171, Q174, R187, N202, N212, Q233, and K238 together coordinate FMN. A PAC 1 domain is found at 194-248 (KSYCGRLLNYKKDGTPFWNLLTVTPIKDDQGNTIKFIGMQVEVSKYTEGVNDKAL). The tract at residues 281 to 344 (HRKSQVQESV…KSSNNRHEDL (64 aa)) is disordered. Composition is skewed to polar residues over residues 286-310 (VQESVSNDTMVKPDSSTTPTPGRQT) and 325-337 (RVSTPTGSKLKSS). Residue S364 is modified to Phosphoserine. The PAS 2 domain maps to 376 to 449 (QGIDLATTLE…QKIRDAIRDQ (74 aa)). N425 contributes to the FMN binding site. Position 426 is an S-4a-FMN cysteine (C426). FMN is bound by residues R427, Q430, R443, N458, N468, F470, and Q489. The PAC 2 domain occupies 450–504 (REITVQLINYTKSGKKFWNLFHLQPMRDQKGELQYFIGVQLDGSDHVEPLQNRLS). Residues 577–864 (FKPIKPLGSG…ANEIKQHAFF (288 aa)) enclose the Protein kinase domain. Residues 583–591 (LGSGDTGSV) and K606 contribute to the ATP site. Catalysis depends on D702, which acts as the Proton acceptor. Residues 720 to 774 (DFDLSFMTTCTPQLIIPAAPSKRRRSKSQPLPTFVAEPSTQSNSFVGTEEYIAPE) are activation loop.

The protein belongs to the protein kinase superfamily. AGC Ser/Thr protein kinase family. Homodimer. Interacts with PKS1, PKS2, RPT3 and PHOT1. Associates with CBC1 and CBC2. Binds to BHP. Requires FMN as cofactor. In terms of processing, autophosphorylated in response to blue light irradiation. Post-translationally, 2 molecules of FMN bind covalently to cysteines after exposure to blue light and are reversed in the dark. Expressed in leaves, stems and flowers, and to a lower extent in roots. Present in guard cells (at protein level).

The protein localises to the cell membrane. It catalyses the reaction L-seryl-[protein] + ATP = O-phospho-L-seryl-[protein] + ADP + H(+). The enzyme catalyses L-threonyl-[protein] + ATP = O-phospho-L-threonyl-[protein] + ADP + H(+). With respect to regulation, autophosphorylation is inhibited by staurosporine, but not by tyrphostin 9, sphingosine, GW5074 and BML-265. Functionally, protein kinase that acts as a blue light photoreceptor in a signal-transduction pathway for photo-induced movements. Triggers the phosphorylation of AHA1 and AHA2 C-terminal penultimate Thr in guard cells to activate them and induce stomatal opening in response to blue light (BL). Also phosphorylates BLUS1, a kinase involved in stomatal opening. Mediates calcium spiking of extra- and intracellular origins in response to blue light. Involved in hypocotyl phototropism. Contributes to the chloroplast accumulation in low blue light and mediates their translocation (avoidance response) at high fluence. Regulates stomata opening and photomorphogenesis response of leaf tissue. Not involved in hypocotyl elongation inhibition, anthocyanin accumulation or cotyledon opening. This Arabidopsis thaliana (Mouse-ear cress) protein is Phototropin-2.